A 209-amino-acid chain; its full sequence is Large ribosomal subunit protein uL3 (209 aa).

The tract at residues 127 to 166 is disordered; sequence NFGGGQRTHGQSDRLRAPGSIGGASDPSKTFKGTKMGGRM.

It belongs to the universal ribosomal protein uL3 family. Part of the 50S ribosomal subunit. Forms a cluster with proteins L14 and L19.

One of the primary rRNA binding proteins, it binds directly near the 3'-end of the 23S rRNA, where it nucleates assembly of the 50S subunit. In Chlorobium phaeovibrioides (strain DSM 265 / 1930) (Prosthecochloris vibrioformis (strain DSM 265)), this protein is Large ribosomal subunit protein uL3.